We begin with the raw amino-acid sequence, 197 residues long: Imidazoleglycerol-phosphate dehydratase (197 aa).

It belongs to the imidazoleglycerol-phosphate dehydratase family.

The protein resides in the cytoplasm. The catalysed reaction is D-erythro-1-(imidazol-4-yl)glycerol 3-phosphate = 3-(imidazol-4-yl)-2-oxopropyl phosphate + H2O. It functions in the pathway amino-acid biosynthesis; L-histidine biosynthesis; L-histidine from 5-phospho-alpha-D-ribose 1-diphosphate: step 6/9. This Laribacter hongkongensis (strain HLHK9) protein is Imidazoleglycerol-phosphate dehydratase.